A 121-amino-acid polypeptide reads, in one-letter code: Small ribosomal subunit protein uS13 (121 aa).

Residues 94 to 121 (GLPVRGQNTKNNSRTRKGPRRTVANKKK) form a disordered region. The span at 106–121 (SRTRKGPRRTVANKKK) shows a compositional bias: basic residues.

It belongs to the universal ribosomal protein uS13 family. Part of the 30S ribosomal subunit. Forms a loose heterodimer with protein S19. Forms two bridges to the 50S subunit in the 70S ribosome.

Functionally, located at the top of the head of the 30S subunit, it contacts several helices of the 16S rRNA. In the 70S ribosome it contacts the 23S rRNA (bridge B1a) and protein L5 of the 50S subunit (bridge B1b), connecting the 2 subunits; these bridges are implicated in subunit movement. Contacts the tRNAs in the A and P-sites. The chain is Small ribosomal subunit protein uS13 from Exiguobacterium sibiricum (strain DSM 17290 / CCUG 55495 / CIP 109462 / JCM 13490 / 255-15).